The sequence spans 204 residues: Imidazoleglycerol-phosphate dehydratase (204 aa).

The protein belongs to the imidazoleglycerol-phosphate dehydratase family.

The protein localises to the cytoplasm. The catalysed reaction is D-erythro-1-(imidazol-4-yl)glycerol 3-phosphate = 3-(imidazol-4-yl)-2-oxopropyl phosphate + H2O. Its pathway is amino-acid biosynthesis; L-histidine biosynthesis; L-histidine from 5-phospho-alpha-D-ribose 1-diphosphate: step 6/9. This chain is Imidazoleglycerol-phosphate dehydratase, found in Rhodococcus erythropolis (strain PR4 / NBRC 100887).